Consider the following 104-residue polypeptide: Large ribosomal subunit protein uL24 (104 aa).

The protein belongs to the universal ribosomal protein uL24 family. Part of the 50S ribosomal subunit.

Functionally, one of two assembly initiator proteins, it binds directly to the 5'-end of the 23S rRNA, where it nucleates assembly of the 50S subunit. Its function is as follows. One of the proteins that surrounds the polypeptide exit tunnel on the outside of the subunit. The sequence is that of Large ribosomal subunit protein uL24 from Pseudomonas fluorescens (strain SBW25).